A 122-amino-acid chain; its full sequence is Ribonuclease P protein component (122 aa).

This sequence belongs to the RnpA family. Consists of a catalytic RNA component (M1 or rnpB) and a protein subunit.

It catalyses the reaction Endonucleolytic cleavage of RNA, removing 5'-extranucleotides from tRNA precursor.. In terms of biological role, RNaseP catalyzes the removal of the 5'-leader sequence from pre-tRNA to produce the mature 5'-terminus. It can also cleave other RNA substrates such as 4.5S RNA. The protein component plays an auxiliary but essential role in vivo by binding to the 5'-leader sequence and broadening the substrate specificity of the ribozyme. The polypeptide is Ribonuclease P protein component (Oenococcus oeni (strain ATCC BAA-331 / PSU-1)).